The primary structure comprises 96 residues: uncharacterized protein (96 aa).

This is an uncharacterized protein from Sulfolobus islandicus filamentous virus (isolate Iceland/Hveragerdi) (SIFV).